We begin with the raw amino-acid sequence, 166 residues long: Ribosome maturation factor RimM (166 aa).

Residues 90–163 (EGEFLVSQII…TVTIELLEGL (74 aa)) form the PRC barrel domain.

The protein belongs to the RimM family. As to quaternary structure, binds ribosomal protein uS19.

The protein localises to the cytoplasm. Functionally, an accessory protein needed during the final step in the assembly of 30S ribosomal subunit, possibly for assembly of the head region. Essential for efficient processing of 16S rRNA. May be needed both before and after RbfA during the maturation of 16S rRNA. It has affinity for free ribosomal 30S subunits but not for 70S ribosomes. This Oenococcus oeni (strain ATCC BAA-331 / PSU-1) protein is Ribosome maturation factor RimM.